Reading from the N-terminus, the 152-residue chain is Probable ribose-5-phosphate isomerase B (152 aa).

Residue 10–11 (DH) participates in D-ribulose 5-phosphate binding. Cys-69 (proton acceptor) is an active-site residue. 70 to 74 (GTGVG) is a binding site for D-ribulose 5-phosphate. His-102 acts as the Proton donor in catalysis. D-ribulose 5-phosphate is bound by residues Asp-103, Arg-113, Arg-136, and Arg-140.

It belongs to the LacAB/RpiB family. Homodimer.

The enzyme catalyses aldehydo-D-ribose 5-phosphate = D-ribulose 5-phosphate. It functions in the pathway carbohydrate degradation; pentose phosphate pathway; D-ribose 5-phosphate from D-ribulose 5-phosphate (non-oxidative stage): step 1/1. Its function is as follows. Catalyzes the interconversion of ribulose-5-P and ribose-5-P. The protein is Probable ribose-5-phosphate isomerase B of Mycoplasma genitalium (strain ATCC 33530 / DSM 19775 / NCTC 10195 / G37) (Mycoplasmoides genitalium).